We begin with the raw amino-acid sequence, 295 residues long: Fructose-bisphosphate aldolase class 1 (295 aa).

Residue Glu-176 is the Proton acceptor of the active site. The active-site Schiff-base intermediate with dihydroxyacetone-P is the Lys-213.

It belongs to the class I fructose-bisphosphate aldolase family.

The enzyme catalyses beta-D-fructose 1,6-bisphosphate = D-glyceraldehyde 3-phosphate + dihydroxyacetone phosphate. It participates in carbohydrate degradation; glycolysis; D-glyceraldehyde 3-phosphate and glycerone phosphate from D-glucose: step 4/4. This Clostridium acetobutylicum (strain ATCC 824 / DSM 792 / JCM 1419 / IAM 19013 / LMG 5710 / NBRC 13948 / NRRL B-527 / VKM B-1787 / 2291 / W) protein is Fructose-bisphosphate aldolase class 1.